The sequence spans 367 residues: Trans-enoyl reductase opdC (367 aa).

NADP(+)-binding positions include 47 to 50 (YDAK), 199 to 202 (SPHN), Tyr-217, 264 to 265 (LD), and 353 to 354 (IT).

This sequence belongs to the zinc-containing alcohol dehydrogenase family. Monomer.

It functions in the pathway secondary metabolite biosynthesis. Its function is as follows. Trans-enoyl reductase; part of the gene cluster that mediates the biosynthesis of oxopyrrolidines, polyketide-amino acid hybrid compounds with feature structures of tetramic acid. The polyketide chain is first assembled by the highly reducing PKS module of opdA using acetyl-CoA as the starter unit and five malonyl-CoA as the extender units. OpdC acts as a trans-acting enoyl reductase and reduces the terminal alkenyl to alkane. The 17R in oxopyrrolidine A and 15R, 17S in oxopyrrolidine B are generated by non-stereospecific catalysis of the ketoreductase (KR) domain and enoyl reductases. Then the polyketides with specific configurations are transferred to the NRPS module of opdA and linked to L-tyrosine to form an amide bond. Finally, the oxopyrrolidines are offloaded through a Dieckmann cyclization catalyzed by the terminal D domain to give a tetramic acid moiety. In Penicillium oxalicum (strain 114-2 / CGMCC 5302) (Penicillium decumbens), this protein is Trans-enoyl reductase opdC.